A 191-amino-acid chain; its full sequence is Pyridoxal 5'-phosphate synthase subunit PdxT (191 aa).

46–48 lines the L-glutamine pocket; sequence GES. Cys-75 (nucleophile) is an active-site residue. L-glutamine is bound by residues Arg-101 and 129–130; that span reads IR. Catalysis depends on charge relay system residues His-165 and Glu-167.

It belongs to the glutaminase PdxT/SNO family. In terms of assembly, in the presence of PdxS, forms a dodecamer of heterodimers. Only shows activity in the heterodimer.

The catalysed reaction is aldehydo-D-ribose 5-phosphate + D-glyceraldehyde 3-phosphate + L-glutamine = pyridoxal 5'-phosphate + L-glutamate + phosphate + 3 H2O + H(+). The enzyme catalyses L-glutamine + H2O = L-glutamate + NH4(+). It participates in cofactor biosynthesis; pyridoxal 5'-phosphate biosynthesis. Its function is as follows. Catalyzes the hydrolysis of glutamine to glutamate and ammonia as part of the biosynthesis of pyridoxal 5'-phosphate. The resulting ammonia molecule is channeled to the active site of PdxS. The polypeptide is Pyridoxal 5'-phosphate synthase subunit PdxT (Staphylococcus saprophyticus subsp. saprophyticus (strain ATCC 15305 / DSM 20229 / NCIMB 8711 / NCTC 7292 / S-41)).